Here is a 79-residue protein sequence, read N- to C-terminus: MSGGGVFTDILAAAGRIFEVMVEGHWETVGMLFDSLGKGTMRINRNAYGSMGGGSLRGSSPEVSGYAVPTKEVESKFAK.

His25 provides a ligand contact to a bacteriochlorophyll c.

Belongs to the BChl C/E-binding protein family.

The protein resides in the chlorosome. It localises to the chlorosome envelope. In terms of biological role, component of the photosynthetic apparatus. The light harvesting B740 complex binds bacteriochlorophyll c. This chain is Bacteriochlorophyll c-binding protein (csmA), found in Chlorobaculum tepidum (strain ATCC 49652 / DSM 12025 / NBRC 103806 / TLS) (Chlorobium tepidum).